The sequence spans 97 residues: Exodeoxyribonuclease 7 small subunit (97 aa).

Positions methionine 1 to asparagine 22 are disordered.

Belongs to the XseB family. In terms of assembly, heterooligomer composed of large and small subunits.

The protein localises to the cytoplasm. The enzyme catalyses Exonucleolytic cleavage in either 5'- to 3'- or 3'- to 5'-direction to yield nucleoside 5'-phosphates.. Its function is as follows. Bidirectionally degrades single-stranded DNA into large acid-insoluble oligonucleotides, which are then degraded further into small acid-soluble oligonucleotides. The polypeptide is Exodeoxyribonuclease 7 small subunit (Burkholderia ambifaria (strain MC40-6)).